Reading from the N-terminus, the 475-residue chain is Divinyl ether synthase CYP74M1 (475 aa).

C427 provides a ligand contact to heme.

The protein belongs to the cytochrome P450 family. Requires heme as cofactor.

It catalyses the reaction (13S)-hydroperoxy-(9Z,11E)-octadecadienoate = etheroleate + H2O. It carries out the reaction (13S)-hydroperoxy-(9Z,11E,15Z)-octadecatrienoate = etherolenate + H2O. It functions in the pathway lipid metabolism; oxylipin biosynthesis. Functionally, divinyl ether synthase involved in oxylipin biosynthesis. Catalyzes the conversion of (13S)-hydroperoxy-(9Z,11E)-octadecadienoate (13-HPOD) to etheroleate and (13S)-hydroperoxy-(9Z,11E,15Z)-octadecatrienoate (13-HPOT) to etherolenate. Has no activity with the corresponding 9-hydroperoxides (9-HPOD and 9-HPOT). In Selaginella moellendorffii (Spikemoss), this protein is Divinyl ether synthase CYP74M1.